Consider the following 742-residue polypeptide: Glycine--tRNA ligase (742 aa).

The WHEP-TRS domain maps to 73-129; that stretch reads KLAPLRAAVKEYGDLIRDLKAKGAPKIDIDKAVVELKARKRLLEDTEIALAPKEASF. A glycine-binding site is contributed by glutamate 309. Residues 341 to 343 and 352 to 353 contribute to the ATP site; these read RNE and RV. Position 360 (glutamate 360) interacts with glycine. 467–468 is an ATP binding site; the sequence is EC. Residue 586-588 participates in glycine binding; it reads EPS. Arginine 593 serves as a coordination point for ATP.

It belongs to the class-II aminoacyl-tRNA synthetase family. In terms of assembly, homodimer.

It localises to the cytoplasm. It is found in the cell projection. Its subcellular location is the axon. The protein resides in the secreted. The protein localises to the extracellular exosome. It catalyses the reaction tRNA(Gly) + glycine + ATP = glycyl-tRNA(Gly) + AMP + diphosphate. It carries out the reaction 2 ATP + H(+) = P(1),P(4)-bis(5'-adenosyl) tetraphosphate + diphosphate. Functionally, catalyzes the ATP-dependent ligation of glycine to the 3'-end of its cognate tRNA, via the formation of an aminoacyl-adenylate intermediate (Gly-AMP). Also produces diadenosine tetraphosphate (Ap4A), a universal pleiotropic signaling molecule needed for cell regulation pathways, by direct condensation of 2 ATPs. Thereby, may play a special role in Ap4A homeostasis. The chain is Glycine--tRNA ligase from Caenorhabditis elegans.